Here is a 102-residue protein sequence, read N- to C-terminus: Small ribosomal subunit protein bS6 (102 aa).

Belongs to the bacterial ribosomal protein bS6 family.

Binds together with bS18 to 16S ribosomal RNA. The protein is Small ribosomal subunit protein bS6 (rpsF) of Deinococcus radiodurans (strain ATCC 13939 / DSM 20539 / JCM 16871 / CCUG 27074 / LMG 4051 / NBRC 15346 / NCIMB 9279 / VKM B-1422 / R1).